Consider the following 265-residue polypeptide: NADH dehydrogenase [ubiquinone] iron-sulfur protein 3, mitochondrial (265 aa).

The N-terminal 33 residues, 1–33 (MAALIRNLGARAAVAALSAKHVVPAAGSTALRM), are a transit peptide targeting the mitochondrion.

Belongs to the complex I 30 kDa subunit family. Part of the mitochondrial membrane respiratory chain NADH dehydrogenase (Complex I). Interacts with sicily; interaction is stronger with unprocessed sicily protein.

It localises to the mitochondrion. The catalysed reaction is a ubiquinone + NADH + 5 H(+)(in) = a ubiquinol + NAD(+) + 4 H(+)(out). Core subunit of the mitochondrial membrane respiratory chain NADH dehydrogenase (Complex I) that is believed to belong to the minimal assembly required for catalysis. Complex I functions in the transfer of electrons from NADH to the respiratory chain. The immediate electron acceptor for the enzyme is believed to be ubiquinone. The chain is NADH dehydrogenase [ubiquinone] iron-sulfur protein 3, mitochondrial from Drosophila melanogaster (Fruit fly).